The primary structure comprises 98 residues: Bombyxin E-1 (98 aa).

The N-terminal stretch at 1-19 is a signal peptide; the sequence is MNRPVFLVLLLTGFLCIAA. At Q20 the chain carries Pyrrolidone carboxylic acid. 3 disulfides stabilise this stretch: C29–C85, C41–C98, and C84–C89. The propeptide at 50–75 is c peptide like; that stretch reads SESSLASYSSRGWPWLPTPNFNKRAI.

The protein belongs to the insulin family. In terms of assembly, heterodimer of a B chain and an A chain linked by two disulfide bonds.

It localises to the secreted. Functionally, PTTH is a brain peptide responsible for activation of prothoracic glands to produce ecdysone in insects. The polypeptide is Bombyxin E-1 (BBXE1) (Bombyx mori (Silk moth)).